The following is a 61-amino-acid chain: MAKKALVNKANKKPKFKVRGYTRCNRCGRPHAVFRKFGLCRICLREMAHAGELPGVQKSSW.

Cys-24, Cys-27, Cys-40, and Cys-43 together coordinate Zn(2+).

The protein belongs to the universal ribosomal protein uS14 family. Zinc-binding uS14 subfamily. Part of the 30S ribosomal subunit. Contacts proteins S3 and S10. Zn(2+) is required as a cofactor.

In terms of biological role, binds 16S rRNA, required for the assembly of 30S particles and may also be responsible for determining the conformation of the 16S rRNA at the A site. The polypeptide is Small ribosomal subunit protein uS14B (Mycolicibacterium gilvum (strain PYR-GCK) (Mycobacterium gilvum (strain PYR-GCK))).